The sequence spans 501 residues: Cytochrome P450 71B23 (501 aa).

Residues 1–21 form a helical membrane-spanning segment; sequence MSIFLCFLLLLLLLLVTIIFT. Residue Cys443 coordinates heme.

Belongs to the cytochrome P450 family. Heme serves as cofactor.

The protein resides in the membrane. In Arabidopsis thaliana (Mouse-ear cress), this protein is Cytochrome P450 71B23 (CYP71B23).